Here is a 149-residue protein sequence, read N- to C-terminus: SsrA-binding protein (149 aa).

The interval 121–149 is disordered; sequence GKKQHDKRAAEKDREWQREKQRLVRSAQH. The segment covering 127-142 has biased composition (basic and acidic residues); the sequence is KRAAEKDREWQREKQR.

This sequence belongs to the SmpB family.

It is found in the cytoplasm. In terms of biological role, required for rescue of stalled ribosomes mediated by trans-translation. Binds to transfer-messenger RNA (tmRNA), required for stable association of tmRNA with ribosomes. tmRNA and SmpB together mimic tRNA shape, replacing the anticodon stem-loop with SmpB. tmRNA is encoded by the ssrA gene; the 2 termini fold to resemble tRNA(Ala) and it encodes a 'tag peptide', a short internal open reading frame. During trans-translation Ala-aminoacylated tmRNA acts like a tRNA, entering the A-site of stalled ribosomes, displacing the stalled mRNA. The ribosome then switches to translate the ORF on the tmRNA; the nascent peptide is terminated with the 'tag peptide' encoded by the tmRNA and targeted for degradation. The ribosome is freed to recommence translation, which seems to be the essential function of trans-translation. The protein is SsrA-binding protein of Thiobacillus denitrificans (strain ATCC 25259 / T1).